Reading from the N-terminus, the 274-residue chain is Dermonecrotic toxin SdSicTox-betaIIB1aii (274 aa).

The active site involves H5. The Mg(2+) site is built by E25 and D27. The active-site Nucleophile is H41. Cystine bridges form between C45-C51 and C47-C190. Residue D85 coordinates Mg(2+).

This sequence belongs to the arthropod phospholipase D family. Class II subfamily. Mg(2+) is required as a cofactor. Expressed by the venom gland.

The protein resides in the secreted. The enzyme catalyses an N-(acyl)-sphingosylphosphocholine = an N-(acyl)-sphingosyl-1,3-cyclic phosphate + choline. The catalysed reaction is an N-(acyl)-sphingosylphosphoethanolamine = an N-(acyl)-sphingosyl-1,3-cyclic phosphate + ethanolamine. It catalyses the reaction a 1-acyl-sn-glycero-3-phosphocholine = a 1-acyl-sn-glycero-2,3-cyclic phosphate + choline. It carries out the reaction a 1-acyl-sn-glycero-3-phosphoethanolamine = a 1-acyl-sn-glycero-2,3-cyclic phosphate + ethanolamine. Its function is as follows. Dermonecrotic toxins cleave the phosphodiester linkage between the phosphate and headgroup of certain phospholipids (sphingolipid and lysolipid substrates), forming an alcohol (often choline) and a cyclic phosphate. This toxin acts on sphingomyelin (SM). It may also act on ceramide phosphoethanolamine (CPE), lysophosphatidylcholine (LPC) and lysophosphatidylethanolamine (LPE), but not on lysophosphatidylserine (LPS), and lysophosphatidylglycerol (LPG). It acts by transphosphatidylation, releasing exclusively cyclic phosphate products as second products. Induces dermonecrosis, hemolysis, increased vascular permeability, edema, inflammatory response, and platelet aggregation. This chain is Dermonecrotic toxin SdSicTox-betaIIB1aii, found in Sicarius cf. damarensis (strain GJB-2008) (Six-eyed sand spider).